Here is a 61-residue protein sequence, read N- to C-terminus: Large ribosomal subunit protein uL29 (61 aa).

It belongs to the universal ribosomal protein uL29 family.

This is Large ribosomal subunit protein uL29 from Stenotrophomonas maltophilia (strain K279a).